The primary structure comprises 134 residues: T-cell receptor beta chain V region CTL-F3 (134 aa).

Residues 1 to 19 (MAPRLLFCLVLCFLRAEPT) form the signal peptide. A v segment region spans residues 20–115 (NAGVIQTPRH…SAVYLCASSL (96 aa)). Cys42 and Cys111 are joined by a disulfide. A glycan (N-linked (GlcNAc...) asparagine) is linked at Asn90. The segment at 116 to 119 (STGV) is d segment. A j segment region spans residues 120–134 (SYEQYFGPGTRLTVL).

The protein is T-cell receptor beta chain V region CTL-F3 of Mus musculus (Mouse).